Here is a 307-residue protein sequence, read N- to C-terminus: Ornithine carbamoyltransferase (307 aa).

Carbamoyl phosphate contacts are provided by residues 50-53 (STRT), Gln-77, Arg-101, and 128-131 (HPCQ). Residues Asn-160, Asp-224, and 228–229 (SM) contribute to the L-ornithine site. Carbamoyl phosphate contacts are provided by residues 264–265 (CL) and Arg-292.

This sequence belongs to the aspartate/ornithine carbamoyltransferase superfamily. OTCase family.

It localises to the cytoplasm. The catalysed reaction is carbamoyl phosphate + L-ornithine = L-citrulline + phosphate + H(+). The protein operates within amino-acid biosynthesis; L-arginine biosynthesis; L-arginine from L-ornithine and carbamoyl phosphate: step 1/3. Reversibly catalyzes the transfer of the carbamoyl group from carbamoyl phosphate (CP) to the N(epsilon) atom of ornithine (ORN) to produce L-citrulline. This chain is Ornithine carbamoyltransferase, found in Clavibacter sepedonicus (Clavibacter michiganensis subsp. sepedonicus).